The sequence spans 71 residues: General transcription and DNA repair factor IIH subunit TFB5 (71 aa).

It belongs to the TFB5 family. Component of the 7-subunit TFIIH core complex.

It is found in the nucleus. The protein resides in the chromosome. In terms of biological role, component of the general transcription and DNA repair factor IIH (TFIIH) core complex, which is involved in general and transcription-coupled nucleotide excision repair (NER) of damaged DNA and in RNA transcription by RNA polymerase II. In NER, TFIIH acts by opening DNA around the lesion to allow the excision of the damaged oligonucleotide and its replacement by a new DNA fragment. In transcription, TFIIH has an essential role in transcription initiation. When the pre-initiation complex (PIC) has been established, TFIIH is required for promoter opening and promoter escape. Necessary for the stability of the TFIIH complex and for the presence of normal levels of TFIIH in the cell. Required for efficient binding of TFIIH to damaged DNA. Dispensable for normal development, but required when transcription is challenged. The sequence is that of General transcription and DNA repair factor IIH subunit TFB5 from Caenorhabditis elegans.